Here is a 97-residue protein sequence, read N- to C-terminus: YcgL domain-containing protein PputGB1_4120 (97 aa).

The YcgL domain occupies 3–87; the sequence is RICSIYKSPR…AEDEYIEHLP (85 aa).

This chain is YcgL domain-containing protein PputGB1_4120, found in Pseudomonas putida (strain GB-1).